Here is a 476-residue protein sequence, read N- to C-terminus: Ubiquinone biosynthesis monooxygenase COQ6, mitochondrial (476 aa).

A mitochondrion-targeting transit peptide spans 1–35; the sequence is MAARIGSMAGLLCVRWWSSAQLAARGGPLVASQRW. At lysine 219 the chain carries N6-succinyllysine.

This sequence belongs to the UbiH/COQ6 family. Component of a multi-subunit COQ enzyme complex, composed of at least COQ3, COQ4, COQ5, COQ6, COQ7 and COQ9. Interacts with COQ8B and COQ7. The cofactor is FAD. As to expression, expressed in the kidney, in podocytes.

It is found in the mitochondrion inner membrane. The protein resides in the golgi apparatus. It localises to the cell projection. The enzyme catalyses 4-hydroxy-3-(all-trans-decaprenyl)benzoate + 2 reduced [2Fe-2S]-[ferredoxin] + O2 + 2 H(+) = 3,4-dihydroxy-5-(all-trans-decaprenyl)benzoate + 2 oxidized [2Fe-2S]-[ferredoxin] + H2O. It catalyses the reaction 2-methoxy-6-(all-trans-decaprenyl)phenol + 2 reduced [2Fe-2S]-[ferredoxin] + O2 + 2 H(+) = 2-methoxy-6-(all-trans-decaprenyl)benzene-1,4-diol + 2 oxidized [2Fe-2S]-[ferredoxin] + H2O. Its pathway is cofactor biosynthesis; ubiquinone biosynthesis. FAD-dependent monooxygenase required for two non-consecutive steps during ubiquinone biosynthesis. Required for the C5-ring hydroxylation during ubiquinone biosynthesis by catalyzing the hydroxylation of 4-hydroxy-3-(all-trans-decaprenyl)benzoic acid to 3,4-dihydroxy-5-(all-trans-decaprenyl)benzoic acid. Also acts downstream of COQ4, for the C1-hydroxylation during ubiquinone biosynthesis by catalyzing the hydroxylation of 2-methoxy-6-(all-trans-decaprenyl)phenol to 2-methoxy-6-(all-trans-decaprenyl)benzene-1,4-diol. The electrons required for the hydroxylation reaction are funneled indirectly to COQ6 from NADPH via a ferredoxin/ferredoxin reductase system composed of FDX2 and FDXR. The protein is Ubiquinone biosynthesis monooxygenase COQ6, mitochondrial of Mus musculus (Mouse).